Here is a 192-residue protein sequence, read N- to C-terminus: MEEKKTESTNKNVKKANLLDHHSIKHILDESVSDIVTSRGYKEDVRLSNLKLILGTIIIVVALVAQFYNKKFPENRDFLIGCIALYVVLNAVLQLILYTKEKNAILFTYPPEGSFTSTGLVVSSKLPRFSDQYTLTIDSADPKSISAGKSVQLTKSVTQWFTKDGVLVEGLFWKDVEALIKNYAEEEPKKKK.

Residues 1 to 46 (MEEKKTESTNKNVKKANLLDHHSIKHILDESVSDIVTSRGYKEDVR) are Cytoplasmic-facing. The chain crosses the membrane as a helical span at residues 47–69 (LSNLKLILGTIIIVVALVAQFYN). At 70-78 (KKFPENRDF) the chain is on the lumenal side. A helical membrane pass occupies residues 79 to 98 (LIGCIALYVVLNAVLQLILY). The Cytoplasmic segment spans residues 99–192 (TKEKNAILFT…YAEEEPKKKK (94 aa)).

This sequence belongs to the SPCS2 family. In terms of assembly, component of the signal peptidase complex (SPC) composed of a catalytic subunit SEC11 and three accessory subunits SPCS1, SPCS2 and SPCS3. The complex induces a local thinning of the ER membrane which is used to measure the length of the signal peptide (SP) h-region of protein substrates. This ensures the selectivity of the complex towards h-regions shorter than 18-20 amino acids.

The protein localises to the endoplasmic reticulum membrane. Functionally, component of the signal peptidase complex (SPC) which catalyzes the cleavage of N-terminal signal sequences from nascent proteins as they are translocated into the lumen of the endoplasmic reticulum. Enhances the enzymatic activity of SPC and facilitates the interactions between different components of the translocation site. The chain is Signal peptidase complex subunit 2 from Arabidopsis thaliana (Mouse-ear cress).